The sequence spans 284 residues: uncharacterized protein (284 aa).

The next 3 membrane-spanning stretches (helical) occupy residues 174 to 194 (LFVLIVMFTTVHRVQCIYISI), 217 to 237 (MLIPGPGVAHTYIYVAGPGTA), and 241 to 261 (LIVLLLLLLCIVVAVNTSGSC).

The protein resides in the membrane. This is an uncharacterized protein from Saccharomyces cerevisiae (strain ATCC 204508 / S288c) (Baker's yeast).